Reading from the N-terminus, the 86-residue chain is Putative membrane protein insertion efficiency factor (86 aa).

A disordered region spans residues 66 to 86 (AGGHDPVPPVPPQRYPSAQEH).

Belongs to the UPF0161 family.

Its subcellular location is the cell inner membrane. Could be involved in insertion of integral membrane proteins into the membrane. The chain is Putative membrane protein insertion efficiency factor from Nitratidesulfovibrio vulgaris (strain ATCC 29579 / DSM 644 / CCUG 34227 / NCIMB 8303 / VKM B-1760 / Hildenborough) (Desulfovibrio vulgaris).